The following is a 28-amino-acid chain: Basic phospholipase A2 homolog BmatTX-II (28 aa).

In terms of assembly, monomer. As to expression, expressed by the venom gland.

The protein localises to the secreted. Its function is as follows. Snake venom phospholipase A2 homolog that lacks enzymatic activity. Shows high myotoxic activity, neutrophil activation (demonstrated by activation induction of IL-1beta production), and slight cytotoxicity against Jurkat (leukemia T) and SK-BR-3 (breast adenocarcinoma) tumor cell lines. A model of myotoxic mechanism has been proposed: an apo Lys49-PLA2 is activated by the entrance of a hydrophobic molecule (e.g. fatty acid) at the hydrophobic channel of the protein leading to a reorientation of a monomer. This reorientation causes a transition between 'inactive' to 'active' states, causing alignment of C-terminal and membrane-docking sites (MDoS) side-by-side and putting the membrane-disruption sites (MDiS) in the same plane, exposed to solvent and in a symmetric position for both monomers. The MDoS region stabilizes the toxin on membrane by the interaction of charged residues with phospholipid head groups. Subsequently, the MDiS region destabilizes the membrane with penetration of hydrophobic residues. This insertion causes a disorganization of the membrane, allowing an uncontrolled influx of ions (i.e. calcium and sodium), and eventually triggering irreversible intracellular alterations and cell death. This is Basic phospholipase A2 homolog BmatTX-II from Bothrops mattogrossensis (Pitviper).